A 350-amino-acid polypeptide reads, in one-letter code: Nicotinate-nucleotide--dimethylbenzimidazole phosphoribosyltransferase (350 aa).

Glu317 serves as the catalytic Proton acceptor.

It belongs to the CobT family.

The enzyme catalyses 5,6-dimethylbenzimidazole + nicotinate beta-D-ribonucleotide = alpha-ribazole 5'-phosphate + nicotinate + H(+). It participates in nucleoside biosynthesis; alpha-ribazole biosynthesis; alpha-ribazole from 5,6-dimethylbenzimidazole: step 1/2. Functionally, catalyzes the synthesis of alpha-ribazole-5'-phosphate from nicotinate mononucleotide (NAMN) and 5,6-dimethylbenzimidazole (DMB). This Shewanella putrefaciens (strain CN-32 / ATCC BAA-453) protein is Nicotinate-nucleotide--dimethylbenzimidazole phosphoribosyltransferase.